The following is a 178-amino-acid chain: Bifunctional protein PyrR (178 aa).

Residues 99–111 (VILVDDVLFTGRT) carry the PRPP-binding motif.

The protein belongs to the purine/pyrimidine phosphoribosyltransferase family. PyrR subfamily. Homodimer and homohexamer; in equilibrium.

The catalysed reaction is UMP + diphosphate = 5-phospho-alpha-D-ribose 1-diphosphate + uracil. Functionally, regulates transcriptional attenuation of the pyrimidine nucleotide (pyr) operon by binding in a uridine-dependent manner to specific sites on pyr mRNA. This disrupts an antiterminator hairpin in the RNA and favors formation of a downstream transcription terminator, leading to a reduced expression of downstream genes. In terms of biological role, also displays a weak uracil phosphoribosyltransferase activity which is not physiologically significant. The protein is Bifunctional protein PyrR of Ligilactobacillus salivarius (strain UCC118) (Lactobacillus salivarius).